The sequence spans 201 residues: Phosphatidylglycerophosphatase and protein-tyrosine phosphatase 1 (201 aa).

The transit peptide at 1 to 27 (MAATALLEAGLARVLFYPTLLYTLFRG) directs the protein to the mitochondrion. Residues 37–188 (WYHRIDPTVL…LKEFHKQITA (152 aa)) form the Tyrosine-protein phosphatase domain. The active-site Phosphocysteine intermediate is the Cys132.

This sequence belongs to the protein-tyrosine phosphatase family. Non-receptor class dual specificity subfamily. Interacts with STYXL1; the interaction inhibits PTPMT1 catalytic activity.

It is found in the mitochondrion inner membrane. It carries out the reaction a 1,2-diacyl-sn-glycero-3-phospho-(1'-sn-glycero-3'-phosphate) + H2O = a 1,2-diacyl-sn-glycero-3-phospho-(1'-sn-glycerol) + phosphate. The catalysed reaction is O-phospho-L-tyrosyl-[protein] + H2O = L-tyrosyl-[protein] + phosphate. It catalyses the reaction O-phospho-L-seryl-[protein] + H2O = L-seryl-[protein] + phosphate. The enzyme catalyses O-phospho-L-threonyl-[protein] + H2O = L-threonyl-[protein] + phosphate. It carries out the reaction 1,2-di-(9Z-octadecenoyl)-sn-glycero-3-phospho-(1'-sn-glycerol-3'-phosphate) + H2O = 1,2-di-(9Z-octadecenoyl)-sn-glycero-3-phospho-(1'-sn-glycerol) + phosphate. The catalysed reaction is 1,2-dioctanoyl-sn-glycero-3-phospho-(1D-myo-inositol-5-phosphate) + H2O = 1,2-dioctanoyl-sn-glycero-3-phospho-(1D-myo-inositol) + phosphate. It catalyses the reaction a 1-acyl-2-hexanoyl-sn-glycero-3-phospho-(1D-myo-inositol-5-phosphate) + H2O = a 1-acyl-2-hexanoyl-sn-glycero-3-phospho-(1D-myo-inositol) + phosphate. The enzyme catalyses 1,2-dibutyryl-sn-glycero-3-phospho-(1D-myo-inositol-5-phosphate) + H2O = 1,2-dibutyryl-sn-glycero-3-phospho-(1D-myo-inositol) + phosphate. The protein operates within phospholipid metabolism; phosphatidylglycerol biosynthesis; phosphatidylglycerol from CDP-diacylglycerol: step 2/2. Its function is as follows. Lipid phosphatase which dephosphorylates phosphatidylglycerophosphate (PGP) to phosphatidylglycerol (PG). PGP is an essential intermediate in the biosynthetic pathway of cardiolipin, a mitochondrial-specific phospholipid regulating the membrane integrity and activities of the organelle. Has also been shown to display phosphatase activity toward phosphoprotein substrates, specifically mediates dephosphorylation of mitochondrial proteins, thereby playing an essential role in ATP production. Has probably a preference for proteins phosphorylated on Ser and/or Thr residues compared to proteins phosphorylated on Tyr residues. Probably involved in regulation of insulin secretion in pancreatic beta cells. May prevent intrinsic apoptosis, probably by regulating mitochondrial membrane integrity. This is Phosphatidylglycerophosphatase and protein-tyrosine phosphatase 1 from Homo sapiens (Human).